A 424-amino-acid chain; its full sequence is Tyrosine--tRNA ligase (424 aa).

Tyrosine 37 serves as a coordination point for L-tyrosine. Residues 42–51 carry the 'HIGH' region motif; sequence PTADSLHLGH. Tyrosine 175 and glutamine 179 together coordinate L-tyrosine. The 'KMSKS' region signature appears at 235-239; it reads KFGKT. Residue lysine 238 participates in ATP binding. Residues 357–414 form the S4 RNA-binding domain; the sequence is ADLQQALVNAELVPSRGQARTMIGSNAVTINGEKQSNAEYNFSDADRLFGRYTLLRRG.

This sequence belongs to the class-I aminoacyl-tRNA synthetase family. TyrS type 1 subfamily. As to quaternary structure, homodimer.

Its subcellular location is the cytoplasm. It catalyses the reaction tRNA(Tyr) + L-tyrosine + ATP = L-tyrosyl-tRNA(Tyr) + AMP + diphosphate + H(+). In terms of biological role, catalyzes the attachment of tyrosine to tRNA(Tyr) in a two-step reaction: tyrosine is first activated by ATP to form Tyr-AMP and then transferred to the acceptor end of tRNA(Tyr). The protein is Tyrosine--tRNA ligase of Serratia proteamaculans (strain 568).